A 472-amino-acid chain; its full sequence is POU domain, class 5, transcription factor 1 (472 aa).

2 disordered regions span residues 127 to 154 (MPSE…YHLT) and 187 to 255 (ISQA…LTTE). The span at 220-234 (TAQNIPSAQAQSAPR) shows a compositional bias: polar residues. The segment covering 235–245 (SSGSSSGGCSN) has biased composition (low complexity). The span at 246 to 255 (SEEEETLTTE) shows a compositional bias: acidic residues. Residues 249–323 (EETLTTEDLE…LLQRWLNEAE (75 aa)) form the POU-specific domain. Positions 343–402 (KRKRRTSLEGTVRSALESYFVKCPKPNTLEITHISDDLGLERDVVRVWFCNRRQKGKRLA) form a DNA-binding region, homeobox.

It belongs to the POU transcription factor family. Class-7 subfamily.

It is found in the nucleus. Its function is as follows. Involved in early development of embryos, especially in the process of gastrulation. May play an important role in establishing and specifying rhombomeric segments. Seems to be required to maintain the cells in a highly undifferentiated state. In contrast to POU2, T-POU2 lacks DNA-binding activity because of its incomplete pou domain structure. Overexpression of POU2 does not have any effect on development, whereas overexpression of t-POU2 causes developmental retardation or arrest before gastrulation. In Danio rerio (Zebrafish), this protein is POU domain, class 5, transcription factor 1 (pou5f1).